Reading from the N-terminus, the 473-residue chain is Photosystem II CP43 reaction center protein (473 aa).

The propeptide occupies 1–14 (MKNLYSLRRFYHVE). N-acetylthreonine is present on Thr-15. Thr-15 carries the post-translational modification Phosphothreonine. The next 5 helical transmembrane spans lie at 69-93 (LFEV…PHLA), 134-155 (LVGP…KDKN), 178-200 (KAMY…RIIS), 255-275 (KPWA…LSYS), and 291-312 (WFNT…ASQS). Glu-367 provides a ligand contact to [CaMn4O5] cluster. Residues 447–471 (RARAAAAGFEKGIDRDNEPVLSMRP) traverse the membrane as a helical segment.

It belongs to the PsbB/PsbC family. PsbC subfamily. As to quaternary structure, PSII is composed of 1 copy each of membrane proteins PsbA, PsbB, PsbC, PsbD, PsbE, PsbF, PsbH, PsbI, PsbJ, PsbK, PsbL, PsbM, PsbT, PsbX, PsbY, PsbZ, Psb30/Ycf12, at least 3 peripheral proteins of the oxygen-evolving complex and a large number of cofactors. It forms dimeric complexes. The cofactor is Binds multiple chlorophylls and provides some of the ligands for the Ca-4Mn-5O cluster of the oxygen-evolving complex. It may also provide a ligand for a Cl- that is required for oxygen evolution. PSII binds additional chlorophylls, carotenoids and specific lipids..

The protein localises to the plastid. It is found in the chloroplast thylakoid membrane. Its function is as follows. One of the components of the core complex of photosystem II (PSII). It binds chlorophyll and helps catalyze the primary light-induced photochemical processes of PSII. PSII is a light-driven water:plastoquinone oxidoreductase, using light energy to abstract electrons from H(2)O, generating O(2) and a proton gradient subsequently used for ATP formation. This chain is Photosystem II CP43 reaction center protein, found in Chlorella vulgaris (Green alga).